The chain runs to 350 residues: Iron-regulated surface determinant protein A (350 aa).

An N-terminal signal peptide occupies residues 1-46 (MTKHYLNSKYQSEQRSSAMKKITMGTASIILGSLVYIGADSQQVNA). In terms of domain architecture, NEAT spans 62-184 (SQATSQPINF…EFEKAIPTLA (123 aa)). Residues Lys75, Ser82, and Tyr166 each coordinate heme. Positions 188–314 (KPNNVKPVQP…KQASKAKELP (127 aa)) are disordered. The segment covering 203 to 214 (KTPTEQTKPVQP) has biased composition (low complexity). Polar residues-rich tracts occupy residues 252–268 (AHTV…NKVQ) and 278–296 (KSES…QTNK). A compositionally biased stretch (basic and acidic residues) spans 299 to 314 (KHNETPKQASKAKELP). An LPXTG sorting signal motif is present at residues 313–317 (LPKTG). Thr316 carries the pentaglycyl murein peptidoglycan amidated threonine modification. A propeptide spans 317 to 350 (GLTSVDNFISTVAFATLALLGSLSLLLFKRKESK) (removed by sortase A).

This sequence belongs to the IsdA family. Monomer. Interacts with IsdC. Interacts with IsdB.

The protein localises to the secreted. Its subcellular location is the cell wall. Functionally, cell wall-anchored surface receptor that participates in the extraction of heme from oxidized methemoglobin/metHb to enable growth on hemoglobin as a sole iron source. Receives heme from IsdB and transfers it to IsdC. Also plays a role in the inhibition of host immune response. Protects S.aureus against the bactericidal protease activity of apolactoferrin. Decreases bacterial cellular hydrophobicity, which renders S.aureus resistant to bactericidal human skin fatty acids as well as to beta-defensins and cathelicidin. Also binds fibronectin and chains B-beta and gamma of fibrinogen, promoting clumping of S.aureus with fibrinogen. Involved in adherence of S.aureus to human desquamated nasal epithelial cells and is required for nasal colonization. The sequence is that of Iron-regulated surface determinant protein A (isdA) from Staphylococcus aureus (strain Mu3 / ATCC 700698).